The sequence spans 537 residues: CTP synthase (537 aa).

Residues 1–268 (MPFKCIFLTG…STFITEKLGL (268 aa)) form an amidoligase domain region. S14 lines the CTP pocket. Residue S14 participates in UTP binding. Residue 15 to 20 (SLGKGL) participates in ATP binding. Y55 provides a ligand contact to L-glutamine. An ATP-binding site is contributed by D72. Residues D72 and E142 each contribute to the Mg(2+) site. Residues 149–151 (DIE), 188–193 (KTKPTQ), and K224 contribute to the CTP site. UTP contacts are provided by residues 188 to 193 (KTKPTQ) and K224. In terms of domain architecture, Glutamine amidotransferase type-1 spans 294 to 533 (RIGLVGKYVQ…IQAALLYSKN (240 aa)). Position 353 (G353) interacts with L-glutamine. Catalysis depends on C380, which acts as the Nucleophile; for glutamine hydrolysis. Residues 381–384 (LGMQ), E404, and R461 contribute to the L-glutamine site. Catalysis depends on residues H506 and E508.

It belongs to the CTP synthase family. As to quaternary structure, homotetramer.

The enzyme catalyses UTP + L-glutamine + ATP + H2O = CTP + L-glutamate + ADP + phosphate + 2 H(+). The catalysed reaction is L-glutamine + H2O = L-glutamate + NH4(+). It catalyses the reaction UTP + NH4(+) + ATP = CTP + ADP + phosphate + 2 H(+). It functions in the pathway pyrimidine metabolism; CTP biosynthesis via de novo pathway; CTP from UDP: step 2/2. With respect to regulation, allosterically activated by GTP, when glutamine is the substrate; GTP has no effect on the reaction when ammonia is the substrate. The allosteric effector GTP functions by stabilizing the protein conformation that binds the tetrahedral intermediate(s) formed during glutamine hydrolysis. Inhibited by the product CTP, via allosteric rather than competitive inhibition. Catalyzes the ATP-dependent amination of UTP to CTP with either L-glutamine or ammonia as the source of nitrogen. Regulates intracellular CTP levels through interactions with the four ribonucleotide triphosphates. This is CTP synthase from Chlamydia caviae (strain ATCC VR-813 / DSM 19441 / 03DC25 / GPIC) (Chlamydophila caviae).